The primary structure comprises 292 residues: Ribosomal protein L11 methyltransferase (292 aa).

S-adenosyl-L-methionine is bound by residues Thr136, Gly159, Asp181, and Asn228.

This sequence belongs to the methyltransferase superfamily. PrmA family.

The protein localises to the cytoplasm. The catalysed reaction is L-lysyl-[protein] + 3 S-adenosyl-L-methionine = N(6),N(6),N(6)-trimethyl-L-lysyl-[protein] + 3 S-adenosyl-L-homocysteine + 3 H(+). Methylates ribosomal protein L11. The protein is Ribosomal protein L11 methyltransferase of Rhizobium johnstonii (strain DSM 114642 / LMG 32736 / 3841) (Rhizobium leguminosarum bv. viciae).